Consider the following 352-residue polypeptide: Holliday junction branch migration complex subunit RuvB (352 aa).

The interval 4–191 (TDKFSAPDRV…FGIVARLEFY (188 aa)) is large ATPase domain (RuvB-L). Residues Leu-30, Arg-31, Gly-72, Lys-75, Thr-76, Thr-77, 138–140 (EDY), Arg-181, Tyr-191, and Arg-228 each bind ATP. Residue Thr-76 participates in Mg(2+) binding. The small ATPAse domain (RuvB-S) stretch occupies residues 192–262 (TAEELARIVT…IADAALAMLD (71 aa)). The segment at 265-352 (RVGFDLMDRK…GDSGDLIDGE (88 aa)) is head domain (RuvB-H). DNA contacts are provided by Arg-301, Arg-320, and Arg-325.

Belongs to the RuvB family. As to quaternary structure, homohexamer. Forms an RuvA(8)-RuvB(12)-Holliday junction (HJ) complex. HJ DNA is sandwiched between 2 RuvA tetramers; dsDNA enters through RuvA and exits via RuvB. An RuvB hexamer assembles on each DNA strand where it exits the tetramer. Each RuvB hexamer is contacted by two RuvA subunits (via domain III) on 2 adjacent RuvB subunits; this complex drives branch migration. In the full resolvosome a probable DNA-RuvA(4)-RuvB(12)-RuvC(2) complex forms which resolves the HJ.

It localises to the cytoplasm. The catalysed reaction is ATP + H2O = ADP + phosphate + H(+). Functionally, the RuvA-RuvB-RuvC complex processes Holliday junction (HJ) DNA during genetic recombination and DNA repair, while the RuvA-RuvB complex plays an important role in the rescue of blocked DNA replication forks via replication fork reversal (RFR). RuvA specifically binds to HJ cruciform DNA, conferring on it an open structure. The RuvB hexamer acts as an ATP-dependent pump, pulling dsDNA into and through the RuvAB complex. RuvB forms 2 homohexamers on either side of HJ DNA bound by 1 or 2 RuvA tetramers; 4 subunits per hexamer contact DNA at a time. Coordinated motions by a converter formed by DNA-disengaged RuvB subunits stimulates ATP hydrolysis and nucleotide exchange. Immobilization of the converter enables RuvB to convert the ATP-contained energy into a lever motion, pulling 2 nucleotides of DNA out of the RuvA tetramer per ATP hydrolyzed, thus driving DNA branch migration. The RuvB motors rotate together with the DNA substrate, which together with the progressing nucleotide cycle form the mechanistic basis for DNA recombination by continuous HJ branch migration. Branch migration allows RuvC to scan DNA until it finds its consensus sequence, where it cleaves and resolves cruciform DNA. The polypeptide is Holliday junction branch migration complex subunit RuvB (Cupriavidus pinatubonensis (strain JMP 134 / LMG 1197) (Cupriavidus necator (strain JMP 134))).